The chain runs to 679 residues: Protein hook (679 aa).

Residues 6–123 (NEMYYSLLEW…RLLQLVLGCA (118 aa)) enclose the Calponin-homology (CH) domain. Coiled-coil stretches lie at residues 135–437 (EIMC…LKCG) and 480–574 (QTAL…QEIL).

It belongs to the hook family. Homodimer. Interacts with microtubules via its N-terminus.

It is found in the cytoplasm. Its subcellular location is the cytoskeleton. The protein resides in the endosome. It localises to the synapse. Functionally, involved in endocytic trafficking by stabilizing organelles of the endocytic pathway. Probably acts as a cytoskeletal linker protein required to tether endosome vesicles to the cytoskeleton. Involved in modulation of endocytosis at stages required for down-regulation of membrane proteins that control synapse size. Not involved in synaptic vesicle recycling. Required in R7 cells for boss endocytosis into multivesicular bodies (MVBs). Has a role in regulating adult longevity. The sequence is that of Protein hook from Drosophila erecta (Fruit fly).